A 335-amino-acid polypeptide reads, in one-letter code: Mitochondrial thiamine diphosphate carrier 1 (335 aa).

Helical transmembrane passes span Lys-13–Ser-29, Val-88–Leu-105, Tyr-127–Leu-150, Leu-182–Leu-199, Ser-231–Val-247, and Gly-304–Tyr-323. 3 Solcar repeats span residues Lys-13 to Phe-111, Leu-124 to Trp-210, and Leu-232 to Trp-329.

Belongs to the mitochondrial carrier (TC 2.A.29) family.

It is found in the mitochondrion inner membrane. Functionally, mitochondrial transporter that mediates uptake of thiamine diphosphate (ThDP) into mitochondria. The polypeptide is Mitochondrial thiamine diphosphate carrier 1 (Arabidopsis thaliana (Mouse-ear cress)).